The following is a 393-amino-acid chain: Squamosa promoter-binding-like protein 17 (393 aa).

Low complexity predominate over residues 40-49 (AAAVESSSTS). The disordered stretch occupies residues 40–67 (AAAVESSSTSSGGGGKKGKGVAAAAAPP). An SBP-type zinc finger spans residues 71 to 148 (PPRCQVEGCG…AGHNERRRKP (78 aa)). Residues Cys-74, Cys-79, Cys-96, His-99, Cys-115, Cys-118, His-122, and Cys-134 each contribute to the Zn(2+) site. The short motif at 131–147 (KKSCRRRLAGHNERRRK) is the Bipartite nuclear localization signal element. Over residues 137–148 (RLAGHNERRRKP) the composition is skewed to basic residues. Disordered stretches follow at residues 137–158 (RLAG…SRYG), 273–301 (WDTT…GNNP), and 317–393 (GWNS…NWSL). Composition is skewed to polar residues over residues 273–293 (WDTT…STAS) and 380–393 (GAFS…NWSL).

In terms of tissue distribution, expressed in young panicles.

It localises to the nucleus. Functionally, trans-acting factor that binds specifically to the consensus nucleotide sequence 5'-TNCGTACAA-3'. May be involved in panicle development. This is Squamosa promoter-binding-like protein 17 (SPL17) from Oryza sativa subsp. japonica (Rice).